The sequence spans 289 residues: Fatty acid elongase 1 (289 aa).

Transmembrane regions (helical) follow at residues 22 to 42 (VVGY…KLFA), 72 to 92 (AMVL…STVT), 123 to 143 (FWIG…IFLV), 152 to 172 (FLHW…YCVG), 177 to 197 (IWVA…FAIA), 208 to 228 (WAPY…FVTL), and 251 to 271 (LLMY…AHVL). The short motif at 154 to 158 (HWYHH) is the HxxHH motif element. Catalysis depends on histidine 157, which acts as the Nucleophile. A glycan (N-linked (GlcNAc...) asparagine) is linked at asparagine 282.

This sequence belongs to the ELO family.

It is found in the endoplasmic reticulum membrane. It carries out the reaction an acyl-CoA + malonyl-CoA + H(+) = a 3-oxoacyl-CoA + CO2 + CoA. The protein operates within lipid metabolism; fatty acid biosynthesis. Its function is as follows. Involved in the synthesis of fatty acids. Elongates C4 fatty acids. Required for the normal mitochondrial function, energy metabolism and growth of epimastigotes. The polypeptide is Fatty acid elongase 1 (Trypanosoma cruzi (strain CL Brener)).